The primary structure comprises 266 residues: Biotin--[acetyl-CoA-carboxylase] ligase (266 aa).

One can recognise a BPL/LPL catalytic domain in the interval 14-202; the sequence is RSLRDQLIGA…ELEARIIQWR (189 aa). Biotin-binding positions include 38–39, Gln63, Arg67, and Lys138; that span reads ST.

The protein belongs to the biotin--protein ligase family. As to quaternary structure, monomer in solution. Forms dimers under specific crystallization conditions.

It catalyses the reaction biotin + L-lysyl-[protein] + ATP = N(6)-biotinyl-L-lysyl-[protein] + AMP + diphosphate + H(+). The catalysed reaction is biotin + ATP + H(+) = biotinyl-5'-AMP + diphosphate. The enzyme catalyses biotinyl-5'-AMP + L-lysyl-[protein] = N(6)-biotinyl-L-lysyl-[protein] + AMP + 2 H(+). Its activity is regulated as follows. Binding of biotin and ATP significantly increases the thermal stability of BirA and leads to the formation of a high affinity holoenzyme complex. In terms of biological role, catalyzes the transfer of biotin onto a conserved lysine residue of the biotin carboxyl carrier protein (BCCP) domain of acetyl-CoA carboxylase and converts it to active holo-BCCP. Forms an acyl-adenylate intermediate. Cannot use GTP or desthiobiotin. The protein is Biotin--[acetyl-CoA-carboxylase] ligase of Mycobacterium tuberculosis (strain ATCC 25618 / H37Rv).